Here is a 273-residue protein sequence, read N- to C-terminus: SKA complex subunit 1 homolog (273 aa).

A coiled-coil region spans residues 77–97 (KKLVQRSLKEEEKLQHMLANL).

This sequence belongs to the SKA1 family.

This is SKA complex subunit 1 homolog from Zea mays (Maize).